We begin with the raw amino-acid sequence, 189 residues long: UPF0398 protein lp_1753 (189 aa).

The protein belongs to the UPF0398 family.

In Lactiplantibacillus plantarum (strain ATCC BAA-793 / NCIMB 8826 / WCFS1) (Lactobacillus plantarum), this protein is UPF0398 protein lp_1753.